A 205-amino-acid chain; its full sequence is High frequency lysogenization protein HflD homolog (205 aa).

Belongs to the HflD family.

The protein resides in the cytoplasm. The protein localises to the cell inner membrane. This chain is High frequency lysogenization protein HflD homolog, found in Shewanella sp. (strain ANA-3).